Reading from the N-terminus, the 1174-residue chain is DNA-directed RNA polymerase subunit beta (1174 aa).

This sequence belongs to the RNA polymerase beta chain family. In terms of assembly, the RNAP catalytic core consists of 2 alpha, 1 beta, 1 beta' and 1 omega subunit. When a sigma factor is associated with the core the holoenzyme is formed, which can initiate transcription.

It carries out the reaction RNA(n) + a ribonucleoside 5'-triphosphate = RNA(n+1) + diphosphate. Its function is as follows. DNA-dependent RNA polymerase catalyzes the transcription of DNA into RNA using the four ribonucleoside triphosphates as substrates. The chain is DNA-directed RNA polymerase subunit beta from Mycolicibacterium gilvum (strain PYR-GCK) (Mycobacterium gilvum (strain PYR-GCK)).